The primary structure comprises 144 residues: Large ribosomal subunit protein uL15 (144 aa).

The disordered stretch occupies residues 1 to 57; it reads MKLNDLSPAPGSRREKHRPGRGIGSGLGKTGGRGHKGQTSRSGGTIAPGFEGGQQPL. Over residues 21-31 the composition is skewed to gly residues; that stretch reads RGIGSGLGKTG.

It belongs to the universal ribosomal protein uL15 family. Part of the 50S ribosomal subunit.

Functionally, binds to the 23S rRNA. The polypeptide is Large ribosomal subunit protein uL15 (Pseudomonas fluorescens (strain ATCC BAA-477 / NRRL B-23932 / Pf-5)).